The following is a 142-amino-acid chain: UPF0336 protein PPA1896 (142 aa).

The protein belongs to the UPF0336 family.

This Cutibacterium acnes (strain DSM 16379 / KPA171202) (Propionibacterium acnes) protein is UPF0336 protein PPA1896.